The primary structure comprises 92 residues: Small ribosomal subunit protein uS19 (92 aa).

It belongs to the universal ribosomal protein uS19 family.

Protein S19 forms a complex with S13 that binds strongly to the 16S ribosomal RNA. In Magnetococcus marinus (strain ATCC BAA-1437 / JCM 17883 / MC-1), this protein is Small ribosomal subunit protein uS19.